The following is a 270-amino-acid chain: Putative carbamate hydrolase RutD (270 aa).

It belongs to the AB hydrolase superfamily. Hydrolase RutD family.

The enzyme catalyses carbamate + 2 H(+) = NH4(+) + CO2. Involved in pyrimidine catabolism. May facilitate the hydrolysis of carbamate, a reaction that can also occur spontaneously. The chain is Putative carbamate hydrolase RutD from Escherichia coli O44:H18 (strain 042 / EAEC).